Reading from the N-terminus, the 387-residue chain is Probable peptidoglycan glycosyltransferase FtsW (387 aa).

9 helical membrane passes run 19-39, 61-81, 86-106, 118-138, 161-181, 199-219, 286-306, 320-340, and 352-372; these read LDFS…VMVA, ITFL…PMSV, SGLL…PGIG, LGPF…VYFA, VLLI…SVVI, FLLL…ASPY, FIGA…LVIL, YVVF…MGVA, and PFIS…ALVF.

It belongs to the SEDS family. FtsW subfamily.

It localises to the cell inner membrane. It catalyses the reaction [GlcNAc-(1-&gt;4)-Mur2Ac(oyl-L-Ala-gamma-D-Glu-L-Lys-D-Ala-D-Ala)](n)-di-trans,octa-cis-undecaprenyl diphosphate + beta-D-GlcNAc-(1-&gt;4)-Mur2Ac(oyl-L-Ala-gamma-D-Glu-L-Lys-D-Ala-D-Ala)-di-trans,octa-cis-undecaprenyl diphosphate = [GlcNAc-(1-&gt;4)-Mur2Ac(oyl-L-Ala-gamma-D-Glu-L-Lys-D-Ala-D-Ala)](n+1)-di-trans,octa-cis-undecaprenyl diphosphate + di-trans,octa-cis-undecaprenyl diphosphate + H(+). The protein operates within cell wall biogenesis; peptidoglycan biosynthesis. Its function is as follows. Peptidoglycan polymerase that is essential for cell division. The polypeptide is Probable peptidoglycan glycosyltransferase FtsW (Saccharophagus degradans (strain 2-40 / ATCC 43961 / DSM 17024)).